Here is a 453-residue protein sequence, read N- to C-terminus: Allantoinase (453 aa).

Zn(2+) is bound by residues His59, His61, Lys146, His186, His242, and Asp315. Lys146 carries the N6-carboxylysine modification.

It belongs to the metallo-dependent hydrolases superfamily. Allantoinase family. Homotetramer. Zn(2+) serves as cofactor. In terms of processing, carboxylation allows a single lysine to coordinate two zinc ions.

The enzyme catalyses (S)-allantoin + H2O = allantoate + H(+). Its pathway is nitrogen metabolism; (S)-allantoin degradation; allantoate from (S)-allantoin: step 1/1. Catalyzes the conversion of allantoin (5-ureidohydantoin) to allantoic acid by hydrolytic cleavage of the five-member hydantoin ring. This Salmonella paratyphi B (strain ATCC BAA-1250 / SPB7) protein is Allantoinase.